The sequence spans 213 residues: Small ribosomal subunit protein uS5 (213 aa).

The interval Met-1–Glu-41 is disordered. Positions Phe-45–Val-108 constitute an S5 DRBM domain.

It belongs to the universal ribosomal protein uS5 family. As to quaternary structure, part of the 30S ribosomal subunit. Contacts proteins S4 and S8.

In terms of biological role, with S4 and S12 plays an important role in translational accuracy. Its function is as follows. Located at the back of the 30S subunit body where it stabilizes the conformation of the head with respect to the body. This chain is Small ribosomal subunit protein uS5, found in Corynebacterium jeikeium (strain K411).